Consider the following 140-residue polypeptide: Short-chain diamines transporter (140 aa).

4 helical membrane passes run 7–27 (IFHAVLFELMALAIIVPAAAL), 36–56 (LALVGIGLSLYTVVWNYIYNL), 79–99 (VGFEGGLIFISIPVIAWFLEI), and 105–125 (LMLEAGFLVFFLFYATGFNWL).

It belongs to the proteobacterial antimicrobial compound efflux (PACE) (TC 2.A.117) family.

It is found in the cell inner membrane. Mediates the efflux of short-chain diamines when energized by an electrochemical gradient. Confers resistance to chlorhexidine, benzalkonium, proflavine and acriflavine. Mediates efflux of both proflavine and acriflavine via an energy-dependent mechanism. This chain is Short-chain diamines transporter, found in Vibrio parahaemolyticus serotype O3:K6 (strain RIMD 2210633).